We begin with the raw amino-acid sequence, 75 residues long: MLCLPVFIILLLLASPAAPNPLEKRIQSDLIRAALEDADMKTGEREILNIIDSISDVAKQICCQITVDCCVLDEE.

A signal peptide spans 1-19; it reads MLCLPVFIILLLLASPAAP. Residues 20–59 constitute a propeptide that is removed on maturation; sequence NPLEKRIQSDLIRAALEDADMKTGEREILNIIDSISDVAK. Residue Q60 is modified to Pyrrolidone carboxylic acid.

This sequence belongs to the conotoxin T superfamily. In terms of processing, contains 2 disulfide bonds that can be either 'C1-C3, C2-C4' or 'C1-C4, C2-C3', since these disulfide connectivities have been observed for conotoxins with cysteine framework V (for examples, see AC P0DQQ7 and AC P81755). In terms of tissue distribution, expressed by the venom duct.

It is found in the secreted. This is Conotoxin Vn5.6 from Conus ventricosus (Mediterranean cone).